Here is a 422-residue protein sequence, read N- to C-terminus: Inner membrane ALBINO3-like protein 2, chloroplastic (422 aa).

Positions 1–10 (MALQMKQSPS) are enriched in polar residues. A disordered region spans residues 1–22 (MALQMKQSPSMGVRRASQPVLP). A helical membrane pass occupies residues 65-85 (LYTLAEGGPIDVLAQFFEFVL). At 86–96 (QTLDEGLESAK) the chain is on the stromal side. The chain crosses the membrane as a helical span at residues 97 to 117 (IPYSYGFAIIALTVLVKVATF). Over 118-166 (PLTQKQVESTLSLQALQPRVKELQAKYADDPENLQLETARLYKEAGVNP) the chain is Lumenal. A helical membrane pass occupies residues 167 to 187 (LAGCFPTLATIPVFIGLYNAL). Residues 188-225 (SNAAKEGLLTEGFFWIPSLGGPTTIGGGLEWLVPFENG) lie on the Stromal side of the membrane. A helical membrane pass occupies residues 226 to 246 (APPVGWANAAAYLVMPVLLVA). Over 247–275 (SQYASQKIISSQNNQDPSQQQAQAILKFL) the chain is Lumenal. Residues 276-296 (PLMIGWFSLNVPSGLTLYWFV) traverse the membrane as a helical segment. Residues 297 to 422 (NNLLSTGQQL…GSEEGKDNSA (126 aa)) lie on the Stromal side of the membrane. A disordered region spans residues 325-422 (TAGSSTPIVK…GSEEGKDNSA (98 aa)). Basic and acidic residues predominate over residues 334 to 350 (KPKEERVKKVTGKELGS). Positions 358 to 367 (DGEEVEDVEV) are enriched in acidic residues. A compositionally biased stretch (low complexity) spans 368–380 (EVVSSGSSSSSGS). Residues 386-400 (RKGEKFRALKAREAA) show a composition bias toward basic and acidic residues.

The protein belongs to the OXA1/ALB3/YidC (TC 2.A.9.2) family.

It localises to the plastid. Its subcellular location is the chloroplast thylakoid membrane. Functionally, required for the insertion of some light-harvesting complexes (LHC) proteins into the chloroplast thylakoid membrane. Essential for the assembly and activity of LHC I and II. Its function is probably partly distinct from that of ALB3.1. The polypeptide is Inner membrane ALBINO3-like protein 2, chloroplastic (ALB3.2) (Chlamydomonas reinhardtii (Chlamydomonas smithii)).